The sequence spans 197 residues: MATPTNNYNTIVGSPMPTATTAATTTTVTPTQKELNIEDLQLFPSILDIISRIKDDEIDLIRAINLANETRTKTIETLNKLPGINRSLENQEELLKTYKQTLKKKVELLEKLKKLEIFEKYNKIKSTSSQSPQIQSKLELQTELSQTEPSQTEPSQTEPSQTEPSQTESSQIESSQIESSQTETEKSKETTEDIMKE.

Residues Gly-83–Ile-117 adopt a coiled-coil conformation. A compositionally biased stretch (polar residues) spans Ser-126–Leu-144. Residues Ser-126 to Glu-197 form a disordered region. Low complexity predominate over residues Ser-145 to Thr-182. Positions Glu-183–Glu-197 are enriched in basic and acidic residues.

Belongs to the Mediator complex subunit 9 family. As to quaternary structure, component of the Mediator complex.

The protein resides in the nucleus. In terms of biological role, component of the Mediator complex, a coactivator involved in the regulated transcription of nearly all RNA polymerase II-dependent genes. Mediator functions as a bridge to convey information from gene-specific regulatory proteins to the basal RNA polymerase II transcription machinery. Mediator is recruited to promoters by direct interactions with regulatory proteins and serves as a scaffold for the assembly of a functional preinitiation complex with RNA polymerase II and the general transcription factors. The chain is Putative mediator of RNA polymerase II transcription subunit 9 (med9) from Dictyostelium discoideum (Social amoeba).